The sequence spans 323 residues: Mediator of RNA polymerase II transcription subunit 4 (323 aa).

The tract at residues 1–36 is disordered; it reads MLPFKKADSPFKSNPVSRVGSSTRLNQLGNIKSNPT. Residues 11–36 show a composition bias toward polar residues; the sequence is FKSNPVSRVGSSTRLNQLGNIKSNPT. The stretch at 79–167 forms a coiled coil; the sequence is MVQKVNEYER…VSYRNELKKL (89 aa). 2 stretches are compositionally biased toward basic and acidic residues: residues 241–262 and 282–303; these read HELG…KVDH and DEQR…KEEQ. The interval 241-323 is disordered; the sequence is HELGETDKEN…LFDPDDEYSD (83 aa).

It belongs to the Mediator complex subunit 4 family. Component of the Mediator complex.

The protein resides in the nucleus. Component of the Mediator complex, a coactivator involved in the regulated transcription of nearly all RNA polymerase II-dependent genes. Mediator functions as a bridge to convey information from gene-specific regulatory proteins to the basal RNA polymerase II transcription machinery. Mediator is recruited to promoters by direct interactions with regulatory proteins and serves as a scaffold for the assembly of a functional preinitiation complex with RNA polymerase II and the general transcription factors. This chain is Mediator of RNA polymerase II transcription subunit 4 (MED4), found in Candida albicans (strain SC5314 / ATCC MYA-2876) (Yeast).